The following is a 507-amino-acid chain: Maturase K (507 aa).

The protein belongs to the intron maturase 2 family. MatK subfamily.

The protein resides in the plastid. It is found in the chloroplast. Usually encoded in the trnK tRNA gene intron. Probably assists in splicing its own and other chloroplast group II introns. This Annona muricata (Soursop) protein is Maturase K.